We begin with the raw amino-acid sequence, 220 residues long: Guanylate kinase (220 aa).

The Guanylate kinase-like domain occupies 15-194 (GLMLVISSPS…AFDAVQSIVK (180 aa)). Position 22–29 (22–29 (SPSGAGKS)) interacts with ATP.

This sequence belongs to the guanylate kinase family.

The protein localises to the cytoplasm. It catalyses the reaction GMP + ATP = GDP + ADP. Essential for recycling GMP and indirectly, cGMP. In Rhizobium etli (strain ATCC 51251 / DSM 11541 / JCM 21823 / NBRC 15573 / CFN 42), this protein is Guanylate kinase.